Consider the following 371-residue polypeptide: Protein NDRG2 (371 aa).

A disordered region spans residues 1–21 (MAELQEVQITEEKPLLPGQTP). Position 2 is an N-acetylalanine (Ala2). Thr20 carries the post-translational modification Phosphothreonine. Phosphoserine is present on residues Ser326 and Ser328. A Phosphothreonine modification is found at Thr330. Phosphoserine is present on Ser332. Thr334 is modified (phosphothreonine). The interval 334 to 371 (TSAASVDGNRSRSRTLSQSSESGTLSSGPPGHTMEVSC) is disordered. Ser335, Ser338, and Ser344 each carry phosphoserine. Residues 347 to 361 (RTLSQSSESGTLSSG) show a composition bias toward low complexity. Residue Thr348 is modified to Phosphothreonine. Residues Ser350, Ser352, Ser353, and Ser355 each carry the phosphoserine modification. Residue Thr357 is modified to Phosphothreonine. Residue Ser370 is modified to Phosphoserine.

This sequence belongs to the NDRG family. As to quaternary structure, interacts with CTNNB1.

Its subcellular location is the cytoplasm. The protein localises to the perinuclear region. It is found in the cell projection. It localises to the growth cone. Its function is as follows. Contributes to the regulation of the Wnt signaling pathway. Down-regulates CTNNB1-mediated transcriptional activation of target genes, such as CCND1, and may thereby act as tumor suppressor. May be involved in dendritic cell and neuron differentiation. This is Protein NDRG2 (NDRG2) from Pongo abelii (Sumatran orangutan).